The following is a 532-amino-acid chain: Apolipoprotein N-acyltransferase (532 aa).

6 helical membrane-spanning segments follow: residues 37–57, 75–95, 106–126, 128–148, 179–199, and 207–227; these read IFVA…GAIA, WWFG…ALLV, LAVL…AMIA, LLWS…ALAE, VIGL…PALL, and TGIG…AWTL. The 250-residue stretch at 245 to 494 folds into the CN hydrolase domain; that stretch reads VQPSIAQAMK…VGVVDSYLPS (250 aa). Residue glutamate 289 is the Proton acceptor of the active site. Lysine 353 is a catalytic residue. The Nucleophile role is filled by cysteine 406. Residues 505–525 traverse the membrane as a helical segment; that stretch reads GWIQTVLILLTLLAASVGLIL.

Belongs to the CN hydrolase family. Apolipoprotein N-acyltransferase subfamily.

It localises to the cell inner membrane. The enzyme catalyses N-terminal S-1,2-diacyl-sn-glyceryl-L-cysteinyl-[lipoprotein] + a glycerophospholipid = N-acyl-S-1,2-diacyl-sn-glyceryl-L-cysteinyl-[lipoprotein] + a 2-acyl-sn-glycero-3-phospholipid + H(+). The protein operates within protein modification; lipoprotein biosynthesis (N-acyl transfer). In terms of biological role, catalyzes the phospholipid dependent N-acylation of the N-terminal cysteine of apolipoprotein, the last step in lipoprotein maturation. This is Apolipoprotein N-acyltransferase from Brucella suis biovar 1 (strain 1330).